Consider the following 35-residue polypeptide: Turripeptide gsp9a (35 aa).

2 positions are modified to 4-hydroxyproline: proline 3 and proline 4. 3 disulfides stabilise this stretch: cysteine 7–cysteine 22, cysteine 12–cysteine 26, and cysteine 18–cysteine 33. Residues glutamate 14 and glutamate 17 each carry the 4-carboxyglutamate modification.

As to expression, expressed by the venom duct.

The protein localises to the secreted. The polypeptide is Turripeptide gsp9a (Gemmula speciosa (Splendid gem-turris)).